The following is a 675-amino-acid chain: Electrogenic aspartate/glutamate antiporter SLC25A13, mitochondrial (675 aa).

Residue Ala-2 is modified to N-acetylalanine. The interval 2–295 (AAAKVALTKR…TLADIERIAP (294 aa)) is regulatory N-terminal domain. Residues 2-331 (AAAKVALTKR…LLQVAESAYR (330 aa)) lie on the Mitochondrial intermembrane side of the membrane. EF-hand domains are found at residues 51–86 (SQPN…SVLC), 87–122 (APDA…TTIH), 125–157 (IPFN…FLLE), and 158–193 (IQLE…IRPH). Residues Asp-66, Thr-68, Asp-70, Leu-72, and Glu-77 each coordinate Ca(2+). The interval 296 to 311 (LEEGTLPFNLAEAQRQ) is linker loop domain. Residues 321-612 (VLLQVAESAY…LQRWFYIDFG (292 aa)) are carrier domain. 3 Solcar repeats span residues 326-418 (AESA…VRDK), 426-510 (VPLA…VKAS), and 518-606 (VSPG…LQRW). Residues 332–349 (FGLGSVAGAVGATAVYPI) form a helical membrane-spanning segment. Topologically, residues 350 to 392 (DLVKTRMQNQRSTGSFVGELMYKNSFDCFKKVLRYEGFFGLYR) are mitochondrial matrix. An N6-acetyllysine mark is found at Lys-353 and Lys-372. A helical membrane pass occupies residues 393 to 412 (GLLPQLLGVAPEKAIKLTVN). Residues 413–435 (DFVRDKFMHKDGSVPLAAEILAG) are Mitochondrial intermembrane-facing. Residues 436-449 (GCAGGSQVIFTNPL) form a helical membrane-spanning segment. The Mitochondrial matrix portion of the chain corresponds to 450–484 (EIVKIRLQVAGEITTGPRVSALSVVRDLGFFGIYK). Lys-453 is subject to N6-methyllysine. Lys-484 bears the N6-acetyllysine; alternate mark. Position 484 is an N6-succinyllysine; alternate (Lys-484). Residues 485–504 (GAKACFLRDIPFSAIYFPCY) traverse the membrane as a helical segment. Topologically, residues 505–523 (AHVKASFANEDGQVSPGSL) are mitochondrial intermembrane. A helical transmembrane segment spans residues 524–541 (LLAGAIAGMPAASLVTPA). Over 542 to 580 (DVIKTRLQVAARAGQTTYSGVIDCFRKILREEGPKALWK) the chain is Mitochondrial matrix. Lys-580 carries the post-translational modification N6-succinyllysine. Residues 581–600 (GAGARVFRSSPQFGVTLLTY) form a helical membrane-spanning segment. At 601-675 (ELLQRWFYID…STSKAIGGGP (75 aa)) the chain is on the mitochondrial intermembrane side. The segment at 613 to 675 (GVKPMGSEPV…STSKAIGGGP (63 aa)) is C-terminal domain. The residue at position 662 (Lys-662) is an N6-acetyllysine. Ser-666 carries the phosphoserine modification.

This sequence belongs to the mitochondrial carrier (TC 2.A.29) family. As to quaternary structure, homodimer (via N-terminus). As to expression, high levels in liver and low levels in kidney, pancreas, placenta, heart and brain.

The protein resides in the mitochondrion inner membrane. It carries out the reaction L-aspartate(in) + L-glutamate(out) + H(+)(out) = L-aspartate(out) + L-glutamate(in) + H(+)(in). It catalyses the reaction 3-sulfino-L-alanine(out) + L-glutamate(in) + H(+)(in) = 3-sulfino-L-alanine(in) + L-glutamate(out) + H(+)(out). The enzyme catalyses 3-sulfino-L-alanine(out) + L-aspartate(in) = 3-sulfino-L-alanine(in) + L-aspartate(out). Activated by calcium-binding in the mitochondrial intermembrane space. Inhibited by pyridoxal 5'-phosphate, bathophenathroline, mercurials, diethyl pyrocarbonate and N-ethylmaleimide. Its function is as follows. Mitochondrial electrogenic aspartate/glutamate antiporter that favors efflux of aspartate and entry of glutamate and proton within the mitochondria as part of the malate-aspartate shuttle. Also mediates the uptake of L-cysteinesulfinate (3-sulfino-L-alanine) by mitochondria in exchange of L-glutamate and proton. Can also exchange L-cysteinesulfinate with aspartate in their anionic form without any proton translocation. Lacks transport activity towards gamma-aminobutyric acid (GABA). This Homo sapiens (Human) protein is Electrogenic aspartate/glutamate antiporter SLC25A13, mitochondrial.